Here is a 1940-residue protein sequence, read N- to C-terminus: Myosin-13 (1940 aa).

Residues 33-82 (DSKKACFAMDDKEMYVKGMIQSRENDKVTVKTLDDRTLTLNSDQVFPMNP) form the Myosin N-terminal SH3-like domain. The Myosin motor domain occupies 86–782 (DKIEDMAMMT…LLGLLEEMRD (697 aa)). K130 carries the N6,N6,N6-trimethyllysine modification. 179-186 (GESGAGKT) contributes to the ATP binding site. 2 actin-binding regions span residues 659–681 (LNKLMTNLRSTHPHFVRCLIPNE) and 761–775 (RFGHTKVFFKAGLLG). In terms of domain architecture, IQ spans 785 to 814 (LVTLMTRTQAICRGYLMRVEFKKMMERRES). Positions 843–1940 (LLKSAEAERE…RDVGAQKMEE (1098 aa)) form a coiled coil. The interval 1886–1940 (RQAEEAEEQANTQMSKCRRVQHELEEAEERADIAESQVNKLRAKSRDVGAQKMEE) is disordered. The span at 1929 to 1940 (KSRDVGAQKMEE) shows a compositional bias: basic and acidic residues.

The protein belongs to the TRAFAC class myosin-kinesin ATPase superfamily. Myosin family. Muscle myosin is a hexameric protein that consists of 2 heavy chain subunits (MHC), 2 alkali light chain subunits (MLC) and 2 regulatory light chain subunits (MLC-2).

The protein resides in the cytoplasm. The protein localises to the myofibril. Functionally, fast twitching myosin mediating the high-velocity and low-tension contractions of specific striated muscles. This is Myosin-13 (MYH13) from Canis lupus familiaris (Dog).